An 865-amino-acid polypeptide reads, in one-letter code: Aconitate hydratase B (865 aa).

Substrate contacts are provided by residues Arg191, 244–246 (SSR), 414–416 (QDT), and Ser498. [4Fe-4S] cluster is bound by residues Cys710, Cys769, and Cys772. 2 residues coordinate substrate: Arg791 and Arg796.

The protein belongs to the aconitase/IPM isomerase family. In terms of assembly, monomer. AcnB can also form a homodimer. The monomer-homodimer transition is dependent on iron availability and the carboxymethylation of C-273 inhibits the dimer formation. [4Fe-4S] cluster is required as a cofactor.

It catalyses the reaction citrate = D-threo-isocitrate. It carries out the reaction (2S,3R)-3-hydroxybutane-1,2,3-tricarboxylate = 2-methyl-cis-aconitate + H2O. The protein operates within organic acid metabolism; propanoate degradation. Its pathway is carbohydrate metabolism; tricarboxylic acid cycle; isocitrate from oxaloacetate: step 2/2. Involved in the catabolism of short chain fatty acids (SCFA) via the tricarboxylic acid (TCA)(acetyl degradation route) and the 2-methylcitrate cycle I (propionate degradation route). Catalyzes the reversible isomerization of citrate to isocitrate via cis-aconitate. Also catalyzes the hydration of 2-methyl-cis-aconitate to yield (2R,3S)-2-methylisocitrate. The apo form of AcnB functions as a RNA-binding regulatory protein. During oxidative stress inactive AcnB apo-enzyme without iron sulfur clusters binds the acnB mRNA 3' UTRs (untranslated regions), stabilizes acnB mRNA and increases AcnB synthesis, thus mediating a post-transcriptional positive autoregulatory switch. AcnB also decreases the stability of the sodA transcript. This chain is Aconitate hydratase B, found in Escherichia coli (strain K12).